Here is a 634-residue protein sequence, read N- to C-terminus: 1-deoxy-D-xylulose-5-phosphate synthase (634 aa).

Thiamine diphosphate is bound by residues His73 and 114 to 116 (GHS). Position 145 (Asp145) interacts with Mg(2+). Thiamine diphosphate contacts are provided by residues 146–147 (GA), Asn174, Tyr285, and Glu365. A Mg(2+)-binding site is contributed by Asn174.

It belongs to the transketolase family. DXPS subfamily. As to quaternary structure, homodimer. Mg(2+) serves as cofactor. The cofactor is thiamine diphosphate.

It carries out the reaction D-glyceraldehyde 3-phosphate + pyruvate + H(+) = 1-deoxy-D-xylulose 5-phosphate + CO2. Its pathway is metabolic intermediate biosynthesis; 1-deoxy-D-xylulose 5-phosphate biosynthesis; 1-deoxy-D-xylulose 5-phosphate from D-glyceraldehyde 3-phosphate and pyruvate: step 1/1. Functionally, catalyzes the acyloin condensation reaction between C atoms 2 and 3 of pyruvate and glyceraldehyde 3-phosphate to yield 1-deoxy-D-xylulose-5-phosphate (DXP). In Desulforudis audaxviator (strain MP104C), this protein is 1-deoxy-D-xylulose-5-phosphate synthase.